The primary structure comprises 463 residues: Quinolone resistance protein NorB (463 aa).

A run of 14 helical transmembrane segments spans residues 17 to 37 (IGIV…VNVV), 53 to 73 (IAVS…GGLA), 86 to 106 (IILN…LLLI), 107 to 127 (IGRL…LSII), 142 to 162 (YWSI…GAVA), 165 to 185 (LGWR…LFLI), 201 to 221 (FDIK…ILIT), 230 to 250 (SLLF…FIVL), 273 to 293 (TASN…NTFV), 299 to 319 (YSSL…LIMI), 334 to 354 (PMLI…LTFL), 357 to 377 (IFYV…LGIY), 403 to 423 (MASA…YAIV), and 435 to 455 (IALW…LLLV).

The protein belongs to the major facilitator superfamily. TCR/Tet family.

It is found in the cell membrane. Multidrug efflux pump that acts independently of NorA and is one of the factors that confers resistance against diverse quinolones and chemical compounds. The polypeptide is Quinolone resistance protein NorB (norB) (Staphylococcus aureus (strain USA300)).